The following is a 340-amino-acid chain: KRR1 small subunit processome component homolog (340 aa).

Positions 124–192 (DIIKIGNLVH…VRDIVLETMN (69 aa)) constitute a KH domain. The segment covering 228–244 (KNKNISKRKQPKSKKPK) has biased composition (basic residues). Disordered stretches follow at residues 228–259 (KNKN…ESKI) and 271–324 (NQEQ…KVDV). Residues 269–302 (FLNQEQKQAKRNQERSAKQADAAKKQDERRNKDF) are a coiled coil. Basic and acidic residues-rich tracts occupy residues 275–301 (KQAK…RNKD) and 309–324 (APSR…KVDV).

Belongs to the KRR1 family. Monomer. Component of the ribosomal small subunit (SSU) processome.

The protein resides in the nucleus. It localises to the nucleolus. In terms of biological role, required for 40S ribosome biogenesis. Involved in nucleolar processing of pre-18S ribosomal RNA and ribosome assembly. Binds to RNA. Required for female germline development, cell viability during eye development and for survival of dividing cells and epithelial cells during early wing disk development. The sequence is that of KRR1 small subunit processome component homolog from Drosophila persimilis (Fruit fly).